The primary structure comprises 461 residues: Propanal dehydrogenase (CoA-propanoylating) (461 aa).

The targets protein to the BMC stretch occupies residues 1–18; sequence MNTSELETLIRNILSEQL.

It belongs to the EutE/PduP family. In terms of assembly, interacts with PduK, probably with its BMC-containing N-terminus. Interacts with shell proteins PduA and PduJ, interacts with PduQ.

The protein localises to the bacterial microcompartment. The catalysed reaction is propanal + NAD(+) + CoA = propanoyl-CoA + NADH + H(+). It participates in polyol metabolism; 1,2-propanediol degradation. Its function is as follows. A CoA-acylating aldehyde dehydrogenase required for optimal 1,2-propanediol (1,2-PD) degradation. Optimizes growth in the bacterial microcompartment (BMC) dedicated to 1,2-PD degradation by minimizing propionaldehyde toxicity. NAD(+) and NADH are regenerated internally within the Pdu BMC by the PduP and PduQ enzymes, which reduce NAD(+) and oxidize NADH respectively, although there must also be cofactor transport across the BMC. Directly targeted to the BMC. In terms of biological role, expression of a cosmid containing the full 21-gene pdu operon in E.coli allows E.coli to grow on 1,2-propanediol (1,2-PD) with the appearance of bacterial microcompartments (BMC) in its cytoplasm. Functionally, the 1,2-PD-specific bacterial microcompartment (BMC) concentrates low levels of 1,2-PD catabolic enzymes, concentrates volatile reaction intermediates thus enhancing pathway flux and keeps the level of toxic, mutagenic propionaldehyde low. In Citrobacter freundii, this protein is Propanal dehydrogenase (CoA-propanoylating).